Here is a 632-residue protein sequence, read N- to C-terminus: DNA mismatch repair protein MutL (632 aa).

The protein belongs to the DNA mismatch repair MutL/HexB family.

Functionally, this protein is involved in the repair of mismatches in DNA. It is required for dam-dependent methyl-directed DNA mismatch repair. May act as a 'molecular matchmaker', a protein that promotes the formation of a stable complex between two or more DNA-binding proteins in an ATP-dependent manner without itself being part of a final effector complex. This chain is DNA mismatch repair protein MutL, found in Pseudomonas putida (strain GB-1).